Here is a 565-residue protein sequence, read N- to C-terminus: Tetratricopeptide repeat protein 39A (565 aa).

TPR repeat units follow at residues 271-304 (AIFL…QQVW), 461-494 (CLIQ…EKKL), and 502-535 (PNAL…YKVY).

This sequence belongs to the TTC39 family.

This is Tetratricopeptide repeat protein 39A (ttc39a) from Danio rerio (Zebrafish).